An 86-amino-acid chain; its full sequence is Photosystem I reaction center subunit PsaK (86 aa).

Helical transmembrane passes span leucine 14–phenylalanine 34 and phenylalanine 57–valine 77.

It belongs to the PsaG/PsaK family.

It is found in the cellular thylakoid membrane. This chain is Photosystem I reaction center subunit PsaK, found in Nostoc punctiforme (strain ATCC 29133 / PCC 73102).